A 348-amino-acid polypeptide reads, in one-letter code: MNNHSYLKKNSFHEGDARELLKCIEEESIALSVWSPPYHVGKKYEEGQTYEQWSSLLTKVIALHYPILKPGGFLVINIDDILAFPDPRMPRFQAVNLKKHRVSVTREDILNALKLEPELTKYQLAKKFNCSEQTIERRLKGNNIRGGKYNVQTKVKLAGPVLEKAAEEAGLYLYDRRIWAKDPAWQNSQWHSNSYKAVSEFEHLYIFWKPGETVIDRNKLSKEEWASWASRGIWYIPSVRKNDDHEAKFPLLLPQRLIKLLTQKGDTVLDCFMGSGTTAVAALSESRNFIGIEKEPKYIQLSNKNVETFYISRNKEASKIKETNHSVTDEKKKAEQLELLLEENENSL.

Belongs to the N(4)/N(6)-methyltransferase family.

It carries out the reaction a 2'-deoxycytidine in DNA + S-adenosyl-L-methionine = an N(4)-methyl-2'-deoxycytidine in DNA + S-adenosyl-L-homocysteine + H(+). A beta subtype methylase, recognizes the double-stranded sequence 5'-GCCNNNNNGGC-3', methylates C-2 on both strands, and protects the DNA from cleavage by the BglI endonuclease. The polypeptide is Type II methyltransferase M.BglI (bglIM) (Bacillus subtilis).